A 354-amino-acid chain; its full sequence is GTPase Obg (354 aa).

One can recognise an Obg domain in the interval 1–159 (MKFLDQCKIY…RWIWLRLKLI (159 aa)). Residues 160-328 (ADVGLVGLPN…LLRAAYKQVR (169 aa)) form the OBG-type G domain. GTP-binding positions include 166–173 (GLPNAGKS), 191–195 (FTTLT), 213–216 (DIPG), 280–283 (NKID), and 309–311 (SGV). Mg(2+) contacts are provided by Ser173 and Thr193. Residues 335–345 (EEEIDDDEDHV) are compositionally biased toward acidic residues. The disordered stretch occupies residues 335-354 (EEEIDDDEDHVDETPGGWTP).

This sequence belongs to the TRAFAC class OBG-HflX-like GTPase superfamily. OBG GTPase family. In terms of assembly, monomer. Mg(2+) serves as cofactor.

The protein localises to the cytoplasm. Its function is as follows. An essential GTPase which binds GTP, GDP and possibly (p)ppGpp with moderate affinity, with high nucleotide exchange rates and a fairly low GTP hydrolysis rate. Plays a role in control of the cell cycle, stress response, ribosome biogenesis and in those bacteria that undergo differentiation, in morphogenesis control. The chain is GTPase Obg from Caulobacter vibrioides (strain ATCC 19089 / CIP 103742 / CB 15) (Caulobacter crescentus).